A 169-amino-acid chain; its full sequence is Crossover junction endodeoxyribonuclease RuvC (169 aa).

Active-site residues include Asp-15, Glu-75, and Asp-147. Residues Asp-15, Glu-75, and Asp-147 each coordinate Mg(2+).

The protein belongs to the RuvC family. In terms of assembly, homodimer which binds Holliday junction (HJ) DNA. The HJ becomes 2-fold symmetrical on binding to RuvC with unstacked arms; it has a different conformation from HJ DNA in complex with RuvA. In the full resolvosome a probable DNA-RuvA(4)-RuvB(12)-RuvC(2) complex forms which resolves the HJ. Mg(2+) is required as a cofactor.

The protein localises to the cytoplasm. The enzyme catalyses Endonucleolytic cleavage at a junction such as a reciprocal single-stranded crossover between two homologous DNA duplexes (Holliday junction).. Functionally, the RuvA-RuvB-RuvC complex processes Holliday junction (HJ) DNA during genetic recombination and DNA repair. Endonuclease that resolves HJ intermediates. Cleaves cruciform DNA by making single-stranded nicks across the HJ at symmetrical positions within the homologous arms, yielding a 5'-phosphate and a 3'-hydroxyl group; requires a central core of homology in the junction. The consensus cleavage sequence is 5'-(A/T)TT(C/G)-3'. Cleavage occurs on the 3'-side of the TT dinucleotide at the point of strand exchange. HJ branch migration catalyzed by RuvA-RuvB allows RuvC to scan DNA until it finds its consensus sequence, where it cleaves and resolves the cruciform DNA. The protein is Crossover junction endodeoxyribonuclease RuvC of Caulobacter vibrioides (strain ATCC 19089 / CIP 103742 / CB 15) (Caulobacter crescentus).